We begin with the raw amino-acid sequence, 295 residues long: Thioredoxin-related transmembrane protein 2 (295 aa).

The signal sequence occupies residues 1-48 (MAVLAPLIALVYSVPRLSRWLARPYCLLSALLSIAFLLVRKLPPICNG). At 49-102 (LPTQREDGNPCDFDWREVEILMFLSAIVMMKNRRSITVEQHVGNIFMFSKVANA) the chain is on the extracellular side. Residues 103–125 (ILFFRLDIRMGLLYLTLCIVFLM) traverse the membrane as a helical segment. The Thioredoxin domain maps to 114-269 (LLYLTLCIVF…LYQRAKKHSK (156 aa)). Residues 126–295 (TCKPPLYMGP…VPDGENKKDK (170 aa)) lie on the Cytoplasmic side of the membrane. 2 positions are modified to phosphoserine: S211 and S243. Positions 266-295 (KHSKGGDMSEEKPVDPAPTTVPDGENKKDK) are disordered. Basic and acidic residues predominate over residues 269-279 (KGGDMSEEKPV). Positions 292-295 (KKDK) match the Di-lysine motif motif.

In terms of assembly, monomer. Homodimer; disulfide-linked. Occurs in both reduced and oxidized monomeric form. Oxidative conditions increase homodimerization. Interacts with CANX. Interacts with ATP2A2.

It is found in the endoplasmic reticulum membrane. Its subcellular location is the mitochondrion membrane. Its function is as follows. Endoplasmic reticulum and mitochondria-associated protein that probably functions as a regulator of cellular redox state and thereby regulates protein post-translational modification, protein folding and mitochondrial activity. Indirectly regulates neuronal proliferation, migration, and organization in the developing brain. This Mus musculus (Mouse) protein is Thioredoxin-related transmembrane protein 2 (Tmx2).